The primary structure comprises 519 residues: Iroquois-class homeodomain protein IRX-4 (519 aa).

The homeobox; TALE-type DNA-binding region spans glycine 143–asparagine 204. Residues asparagine 204–lysine 298 form a disordered region. Residues lysine 213 to alanine 222 are compositionally biased toward basic and acidic residues. Acidic residues-rich tracts occupy residues glutamate 223–arginine 235 and leucine 257–glutamate 267.

The protein belongs to the TALE/IRO homeobox family. As to quaternary structure, interacts with the vitamin D receptor VDR but doesn't affect its transactivation activity. Predominantly expressed in cardiac ventricles.

Its subcellular location is the nucleus. Its function is as follows. Likely to be an important mediator of ventricular differentiation during cardiac development. The chain is Iroquois-class homeodomain protein IRX-4 (IRX4) from Homo sapiens (Human).